Consider the following 553-residue polypeptide: MSIIDQVKQTLIEEIEVSIRKANLAEDIPEIKIEIPKDPKNGDYSSNIAMVLTKIAKRNPREIAQAIVDHLDTSKAHVKQVDIAGPGFINFYLDNQYLTAIIPEAITKGDRFGYATQSKNTNILLEYVSANPTGDLHIGHARNASVGDSLANILIAAGYNVTREYYINDAGNQITNLARSIEARYFEALGDTSYEMPADGYNGKDIIEIGKDLAVKHPEIKDYTDEERLKTFRQLGVDYEMEKLKKDLSDFNVHFDNWFSETSLYENGAIENTLSKMKELGYTYEADGATWLRTSDFKDDKDRVLIKKDGNYTYFTPDTAYHYNKINRGNDILIDLMGADHHGYINRLKASLETFGVDSDRLEIQIMQMVRLMQNGEEVKMSKRTGNAITLREIMDEVGIDAARYFLTMRSPDSHFDFDLELAKEQSQDNPIYYAQYAHARICSILKQAKEQGIEVSTDADFSKINNDKAIDLLKKVAEFESTIESAAEHRAPHRLTNYIQDLAAAFHKFYNAEKVLTDDTEKTKAYVAMIEAVRITLHNALALVGVTAPESM.

A 'HIGH' region motif is present at residues 130–140 (ANPTGDLHIGH).

This sequence belongs to the class-I aminoacyl-tRNA synthetase family. As to quaternary structure, monomer.

Its subcellular location is the cytoplasm. It carries out the reaction tRNA(Arg) + L-arginine + ATP = L-arginyl-tRNA(Arg) + AMP + diphosphate. This chain is Arginine--tRNA ligase, found in Staphylococcus epidermidis (strain ATCC 35984 / DSM 28319 / BCRC 17069 / CCUG 31568 / BM 3577 / RP62A).